Reading from the N-terminus, the 92-residue chain is Small ribosomal subunit protein uS19c (92 aa).

Belongs to the universal ribosomal protein uS19 family.

Its subcellular location is the plastid. It localises to the chloroplast. Its function is as follows. Protein S19 forms a complex with S13 that binds strongly to the 16S ribosomal RNA. The protein is Small ribosomal subunit protein uS19c of Oltmannsiellopsis viridis (Marine flagellate).